A 204-amino-acid polypeptide reads, in one-letter code: Ribonuclease HII (204 aa).

Residues 17-204 (QLVAGVDEVG…KPVQQLLQGD (188 aa)) form the RNase H type-2 domain. Residues Asp-23, Glu-24, and Asp-115 each coordinate a divalent metal cation.

Belongs to the RNase HII family. Requires Mn(2+) as cofactor. The cofactor is Mg(2+).

The protein resides in the cytoplasm. The enzyme catalyses Endonucleolytic cleavage to 5'-phosphomonoester.. Functionally, endonuclease that specifically degrades the RNA of RNA-DNA hybrids. In Hahella chejuensis (strain KCTC 2396), this protein is Ribonuclease HII.